Reading from the N-terminus, the 463-residue chain is V-type proton ATPase subunit S1 (463 aa).

The signal sequence occupies residues 1 to 32; the sequence is MMAATVVSRIRTGTRWAPVLWLLLSLVAVAAA. The propeptide occupies 33–225; it reads VAAEQQVPLV…TAVRPSRVAR (193 aa). The Lumenal portion of the chain corresponds to 33–412; the sequence is VAAEQQVPLV…EQFSYASDCA (380 aa). N-linked (GlcNAc...) asparagine glycans are attached at residues Asn-164, Asn-255, Asn-267, Asn-290, Asn-297, Asn-344, Asn-351, and Asn-399. The chain crosses the membrane as a helical span at residues 413 to 433; that stretch reads GFFSPGIWMGLLTTLFMLFIF. The Cytoplasmic portion of the chain corresponds to 434-463; the sequence is TYGLHMILSLKTMDRFDDRKGPTITLTQIV.

It belongs to the vacuolar ATPase subunit S1 family. In terms of assembly, accessory component of the multisubunit proton-transporting vacuolar (V)-ATPase protein pump. Interacts (via N-terminus) with ATP6AP2 (via N-terminus). Interacts with RNASEK. Interacts with TMEM106B (via C-terminus). In terms of processing, N-glycosylated. Expressed in brain (at protein level).

It localises to the endoplasmic reticulum membrane. The protein resides in the endoplasmic reticulum-Golgi intermediate compartment membrane. Its subcellular location is the cytoplasmic vesicle. It is found in the secretory vesicle. The protein localises to the synaptic vesicle membrane. It localises to the clathrin-coated vesicle membrane. Accessory subunit of the proton-transporting vacuolar (V)-ATPase protein pump, which is required for luminal acidification of secretory vesicles. Guides the V-type ATPase into specialized subcellular compartments, such as neuroendocrine regulated secretory vesicles or the ruffled border of the osteoclast, thereby regulating its activity. Involved in membrane trafficking and Ca(2+)-dependent membrane fusion. May play a role in the assembly of the V-type ATPase complex. In aerobic conditions, involved in intracellular iron homeostasis, thus triggering the activity of Fe(2+) prolyl hydroxylase (PHD) enzymes, and leading to HIF1A hydroxylation and subsequent proteasomal degradation. In islets of Langerhans cells, may regulate the acidification of dense-core secretory granules. The sequence is that of V-type proton ATPase subunit S1 (Atp6ap1) from Rattus norvegicus (Rat).